A 325-amino-acid polypeptide reads, in one-letter code: Coiled-coil domain-containing protein 130 homolog (325 aa).

A coiled-coil region spans residues 156–262 (LKLENKKLDI…KLKRELIKNE (107 aa)).

Belongs to the CWC16 family.

The chain is Coiled-coil domain-containing protein 130 homolog from Dictyostelium discoideum (Social amoeba).